The primary structure comprises 163 residues: MSKESSFDIVSKVELAEVNNAIQTALKEIENRFDFKGSKSSISLEKEELVLVSDDDFKLSQVKDILLGKLVKRDVPIKNLDYGKIEPAAGGTVRQRAKLVQGIDKDNAKKINSIIKDTGLKVKTQIQDDQIRVTGKSKDELQQIINAIRKADLPLEVQFINYR.

Belongs to the YajQ family.

Its function is as follows. Nucleotide-binding protein. The chain is Nucleotide-binding protein BBR47_25280 from Brevibacillus brevis (strain 47 / JCM 6285 / NBRC 100599).